The chain runs to 91 residues: Small ribosomal subunit protein uS19 (91 aa).

It belongs to the universal ribosomal protein uS19 family.

Its function is as follows. Protein S19 forms a complex with S13 that binds strongly to the 16S ribosomal RNA. The protein is Small ribosomal subunit protein uS19 of Actinobacillus pleuropneumoniae serotype 7 (strain AP76).